Reading from the N-terminus, the 1464-residue chain is Bridge-like lipid transfer protein family member 3B (1464 aa).

A Chorein N-terminal domain is found at 3-94 (GIIKKQILKH…DKVIMEMSTC (92 aa)). Disordered stretches follow at residues 267–297 (STEQRKSMAPEPTQSSTVVASAQQVKTTQTS) and 409–436 (DHNVGSPPKSPTHASPQHTQTEKDYPLK). Over residues 278 to 297 (PTQSSTVVASAQQVKTTQTS) the composition is skewed to polar residues. 5 positions are modified to phosphoserine: Ser414, Ser418, Ser774, Ser935, and Ser1009. Disordered stretches follow at residues 1066–1089 (SKEETPPVRTLKSQSSLSGKPKER), 1164–1183 (LQNYGETSPDAISTNSEGAQ), and 1392–1413 (QRSVTQATQTSPGVPWPSQSAN). Polar residues-rich tracts occupy residues 1164-1182 (LQNYGETSPDAISTNSEGA) and 1394-1413 (SVTQATQTSPGVPWPSQSAN). Residues 1418 to 1456 (SFDFTREQLMEENESLKQELAKAKMALAEAHLEKDALLH) adopt a coiled-coil conformation.

Monomer. Homodimer (via N-terminus). Associates with the Golgi-associated retrograde protein (GARP) complex. Interacts with GARP complex component VPS52. Interacts (via C-terminal coiled-coil domain) with STX6.

Its subcellular location is the cytoplasm. The protein localises to the cytosol. It localises to the early endosome. Its function is as follows. Tube-forming lipid transport protein which mediates the transfer of lipids between membranes at organelle contact sites. Required for retrograde traffic of vesicle clusters in the early endocytic pathway to the Golgi complex. The chain is Bridge-like lipid transfer protein family member 3B from Homo sapiens (Human).